The chain runs to 92 residues: DNA-directed RNA polymerase subunit omega (92 aa).

The protein belongs to the RNA polymerase subunit omega family. As to quaternary structure, the RNAP catalytic core consists of 2 alpha, 1 beta, 1 beta' and 1 omega subunit. When a sigma factor is associated with the core the holoenzyme is formed, which can initiate transcription.

The catalysed reaction is RNA(n) + a ribonucleoside 5'-triphosphate = RNA(n+1) + diphosphate. In terms of biological role, promotes RNA polymerase assembly. Latches the N- and C-terminal regions of the beta' subunit thereby facilitating its interaction with the beta and alpha subunits. This is DNA-directed RNA polymerase subunit omega from Shewanella frigidimarina (strain NCIMB 400).